The chain runs to 321 residues: Probable protein phosphatase methylesterase 1 (321 aa).

Catalysis depends on residues Ser-170, Asp-195, and His-307.

It belongs to the AB hydrolase superfamily.

It catalyses the reaction [phosphatase 2A protein]-C-terminal L-leucine methyl ester + H2O = [phosphatase 2A protein]-C-terminal L-leucine + methanol + H(+). Its function is as follows. Demethylates proteins that have been reversibly carboxymethylated. This Dictyostelium discoideum (Social amoeba) protein is Probable protein phosphatase methylesterase 1 (ppme1).